A 599-amino-acid polypeptide reads, in one-letter code: Elongation factor 4 (599 aa).

Residues 2–184 (KNIRNFSIIA…RLVRDIPPPE (183 aa)) enclose the tr-type G domain. Residues 14 to 19 (DHGKST) and 131 to 134 (NKID) contribute to the GTP site.

Belongs to the TRAFAC class translation factor GTPase superfamily. Classic translation factor GTPase family. LepA subfamily.

It localises to the cell inner membrane. The enzyme catalyses GTP + H2O = GDP + phosphate + H(+). In terms of biological role, required for accurate and efficient protein synthesis under certain stress conditions. May act as a fidelity factor of the translation reaction, by catalyzing a one-codon backward translocation of tRNAs on improperly translocated ribosomes. Back-translocation proceeds from a post-translocation (POST) complex to a pre-translocation (PRE) complex, thus giving elongation factor G a second chance to translocate the tRNAs correctly. Binds to ribosomes in a GTP-dependent manner. The chain is Elongation factor 4 from Sodalis glossinidius (strain morsitans).